A 348-amino-acid polypeptide reads, in one-letter code: tRNA pseudouridine synthase D (348 aa).

Phe-27 is a binding site for substrate. Asp-80 (nucleophile) is an active-site residue. Substrate is bound at residue Asn-129. The 149-residue stretch at 155–303 (GVPNYFGSQR…VEPARRAVLL (149 aa)) folds into the TRUD domain. A substrate-binding site is contributed by Phe-329.

Belongs to the pseudouridine synthase TruD family.

The catalysed reaction is uridine(13) in tRNA = pseudouridine(13) in tRNA. Functionally, responsible for synthesis of pseudouridine from uracil-13 in transfer RNAs. The polypeptide is tRNA pseudouridine synthase D (Pectobacterium atrosepticum (strain SCRI 1043 / ATCC BAA-672) (Erwinia carotovora subsp. atroseptica)).